The sequence spans 151 residues: Caveolin-3 (151 aa).

The Cytoplasmic portion of the chain corresponds to 1–83 (MMTEEHTDLE…RLLSTLLGVP (83 aa)). Lys-38 participates in a covalent cross-link: Glycyl lysine isopeptide (Lys-Gly) (interchain with G-Cter in SUMO3). Positions 84-104 (LALLWGFLFACISFCHIWAVV) form an intramembrane region, helical. The Cytoplasmic portion of the chain corresponds to 105–151 (PCIKSYLIEIQCISHIYSLCIRTFCNPLFAALGQVCSNIKVVLRREG).

Belongs to the caveolin family. As to quaternary structure, homooligomer. Interacts with DYSF. Interacts with DLG1 and KCNA5; forms a ternary complex. Interacts with DAG1 (via its C-terminal); the interaction prevents binding of DAG1 with DMD. Interacts with TRIM72. Interacts with MUSK; may regulate MUSK signaling. Interacts with POPDC1. Interacts with CAVIN1, CAVIN2 and CAVIN4. Post-translationally, sumoylation with SUMO3 by PIAS4 may reduce agonist-induced internalization and desensitization of adrenergic receptor ABRD2. Expressed predominantly in muscle.

Its subcellular location is the golgi apparatus membrane. The protein localises to the cell membrane. It localises to the membrane. The protein resides in the caveola. It is found in the sarcolemma. Its function is as follows. May act as a scaffolding protein within caveolar membranes. Interacts directly with G-protein alpha subunits and can functionally regulate their activity. May also regulate voltage-gated potassium channels. Plays a role in the sarcolemma repair mechanism of both skeletal muscle and cardiomyocytes that permits rapid resealing of membranes disrupted by mechanical stress. Mediates the recruitment of CAVIN2 and CAVIN3 proteins to the caveolae. The chain is Caveolin-3 (Cav3) from Rattus norvegicus (Rat).